A 183-amino-acid chain; its full sequence is uncharacterized protein (183 aa).

4 helical membrane passes run 26–48 (FVAI…IIFY), 72–91 (LLVR…KVFI), 104–121 (IIEA…LIVF), and 125–147 (FTFW…YVLL).

The protein resides in the cell membrane. This is an uncharacterized protein from Aquifex aeolicus (strain VF5).